We begin with the raw amino-acid sequence, 528 residues long: MHHTIKHLLETTLGFSVVLEKPKDKNHGHYATPAAFSLAKELKKNPALIAQELSKKLSEIEVFESVQSVGGYINFRLKQGFLDAQASLALSQGREFGKGDKQGSILLEYVSANPTGPLHIGHARGAVLGDALSRIGRHLGYALETEYYVNDAGNQIHLLGLSIYLAGRDSLLSLPVTYPEQYYRGEYIVDIAKEALKKWGEKAFADEAFIPELSLFGKELMLEEIRSNLADTHIHFDHYVSEKSLYPRWEETYALLQSHQGCYEGGGKVWLRSSAHGDEKDRVIVRESGEPTYLAGDIIYHADKFARPYDRYINIWGADHHGYIARVKAAIEFLGHDSSKLEVLLSQMVTLLKGGQPYKMSKRAGNFILMRDVLEDIGADALRFIFLSKKPDTHLEFDVDDLNKEDSSNPIFYINYAHARIHTMLGKSSLDSQEIEAASLEGLEDSIFDLLFLSLQLPQVLEDSFENRAIQKVAEYLRALAGEFHKFYNEHKILETPQEAALLKVCKVVALSLSQGLALLGITAKERM.

Residues 112 to 122 carry the 'HIGH' region motif; that stretch reads ANPTGPLHIGH.

The protein belongs to the class-I aminoacyl-tRNA synthetase family. As to quaternary structure, monomer.

Its subcellular location is the cytoplasm. It catalyses the reaction tRNA(Arg) + L-arginine + ATP = L-arginyl-tRNA(Arg) + AMP + diphosphate. The protein is Arginine--tRNA ligase of Wolinella succinogenes (strain ATCC 29543 / DSM 1740 / CCUG 13145 / JCM 31913 / LMG 7466 / NCTC 11488 / FDC 602W) (Vibrio succinogenes).